The primary structure comprises 216 residues: Somatotropin (216 aa).

Residues 1–26 form the signal peptide; sequence MAADPQSSVLLAFALLCLPWPQEVGA. Residue His45 participates in Zn(2+) binding. A disulfide bridge links Cys78 with Cys189. Ser131 carries the post-translational modification Phosphoserine. Glu198 is a Zn(2+) binding site. A disulfide bridge connects residues Cys206 and Cys214.

It belongs to the somatotropin/prolactin family.

It localises to the secreted. Its function is as follows. Plays an important role in growth control. Its major role in stimulating body growth is to stimulate the liver and other tissues to secrete IGF1. It stimulates both the differentiation and proliferation of myoblasts. It also stimulates amino acid uptake and protein synthesis in muscle and other tissues. The sequence is that of Somatotropin (GH1) from Ailuropoda melanoleuca (Giant panda).